The following is a 124-amino-acid chain: Small ribosomal subunit protein uS13 (124 aa).

Residues 97 to 124 (PVRGQRTKTNARTRKGPKRTIAGKKKAR) form a disordered region.

Belongs to the universal ribosomal protein uS13 family. In terms of assembly, part of the 30S ribosomal subunit. Forms a loose heterodimer with protein S19. Forms two bridges to the 50S subunit in the 70S ribosome.

In terms of biological role, located at the top of the head of the 30S subunit, it contacts several helices of the 16S rRNA. In the 70S ribosome it contacts the 23S rRNA (bridge B1a) and protein L5 of the 50S subunit (bridge B1b), connecting the 2 subunits; these bridges are implicated in subunit movement. Contacts the tRNAs in the A and P-sites. In Mycolicibacterium gilvum (strain PYR-GCK) (Mycobacterium gilvum (strain PYR-GCK)), this protein is Small ribosomal subunit protein uS13.